Consider the following 43-residue polypeptide: Protein PsbN (43 aa).

The chain crosses the membrane as a helical span at residues 5–27 (TLFAISISCLLVSFTGYALYTAF).

Belongs to the PsbN family.

The protein resides in the plastid. It localises to the chloroplast thylakoid membrane. Its function is as follows. May play a role in photosystem I and II biogenesis. The polypeptide is Protein PsbN (Thuja plicata (Western red-cedar)).